Consider the following 376-residue polypeptide: Erythronate-4-phosphate dehydrogenase (376 aa).

S45 and T67 together coordinate substrate. D147 contributes to the NAD(+) binding site. The active site involves R209. Position 233 (D233) interacts with NAD(+). Residue E238 is part of the active site. The Proton donor role is filled by H255. Position 258 (G258) interacts with NAD(+). Y259 lines the substrate pocket.

This sequence belongs to the D-isomer specific 2-hydroxyacid dehydrogenase family. PdxB subfamily. In terms of assembly, homodimer.

Its subcellular location is the cytoplasm. The enzyme catalyses 4-phospho-D-erythronate + NAD(+) = (R)-3-hydroxy-2-oxo-4-phosphooxybutanoate + NADH + H(+). Its pathway is cofactor biosynthesis; pyridoxine 5'-phosphate biosynthesis; pyridoxine 5'-phosphate from D-erythrose 4-phosphate: step 2/5. Its function is as follows. Catalyzes the oxidation of erythronate-4-phosphate to 3-hydroxy-2-oxo-4-phosphonooxybutanoate. The sequence is that of Erythronate-4-phosphate dehydrogenase from Shewanella sp. (strain MR-7).